The sequence spans 86 residues: RNA-binding protein Hfq (86 aa).

The 62-residue stretch at 12–73 folds into the Sm domain; it reads DIFLNQVRKE…ISTITPQKPV (62 aa).

Belongs to the Hfq family. In terms of assembly, homohexamer.

Functionally, RNA chaperone that binds small regulatory RNA (sRNAs) and mRNAs to facilitate mRNA translational regulation in response to envelope stress, environmental stress and changes in metabolite concentrations. Also binds with high specificity to tRNAs. The protein is RNA-binding protein Hfq of Thermoanaerobacter pseudethanolicus (strain ATCC 33223 / 39E) (Clostridium thermohydrosulfuricum).